The sequence spans 434 residues: Tol-Pal system protein TolB (434 aa).

Residues 1-24 form the signal peptide; the sequence is MKFSAYLTTLFIVLFSLFIQTVQA.

It belongs to the TolB family. The Tol-Pal system is composed of five core proteins: the inner membrane proteins TolA, TolQ and TolR, the periplasmic protein TolB and the outer membrane protein Pal. They form a network linking the inner and outer membranes and the peptidoglycan layer.

The protein resides in the periplasm. Functionally, part of the Tol-Pal system, which plays a role in outer membrane invagination during cell division and is important for maintaining outer membrane integrity. This chain is Tol-Pal system protein TolB, found in Histophilus somni (strain 129Pt) (Haemophilus somnus).